The primary structure comprises 362 residues: Ciliary neurotrophic factor receptor subunit alpha (362 aa).

A signal peptide spans Met-1–Val-19. Residues Arg-23–Val-103 form the Ig-like C2-type domain. A disulfide bridge links Cys-44 with Cys-87. Asn-58, Asn-68, Asn-140, and Asn-188 each carry an N-linked (GlcNAc...) asparagine glycan. Fibronectin type-III domains follow at residues Pro-106–Asp-203 and Pro-204–Pro-304. A WSXWS motif motif is present at residues Trp-288–Ser-292. The GPI-anchor amidated aspartate moiety is linked to residue Asp-334. Positions Lys-335 to Ile-362 are cleaved as a propeptide — removed in mature form.

This sequence belongs to the type I cytokine receptor family. Type 3 subfamily. As to quaternary structure, heterotrimer of the alpha subunit, LIFR and IL6ST. Highly expressed in nervous system. Also found in skeletal muscle.

It localises to the cell membrane. Its function is as follows. Binds to CNTF (GPA). The alpha subunit provides the receptor specificity. The chain is Ciliary neurotrophic factor receptor subunit alpha (CNTFR) from Gallus gallus (Chicken).